The following is a 269-amino-acid chain: 4-hydroxy-4-methyl-2-oxoglutarate aldolase cghB (269 aa).

The Proton acceptor role is filled by His-48. A divalent metal cation-binding residues include Glu-155 and Asp-181. Substrate is bound at residue Asp-181.

This sequence belongs to the HpcH/HpaI aldolase family. In terms of assembly, homohexamer; trimer of dimers. Co(2+) serves as cofactor. The cofactor is Mn(2+). Zn(2+) is required as a cofactor. It depends on Fe(2+) as a cofactor. Requires Mg(2+) as cofactor.

It catalyses the reaction 4-hydroxy-4-methyl-2-oxoglutarate = 2 pyruvate. It participates in secondary metabolite biosynthesis. In terms of biological role, 4-hydroxy-4-methyl-2-oxoglutarate aldolase; part of the gene cluster that mediates the biosynthesis of the tetramic acid Sch210972, a potential anti-HIV fungal natural product that contains a decalin core. The PKS module of cghG together with the enoylreductase cghC catalyze the formation of the polyketide unit which is then conjugated to 4-hydroxyl-4-methyl glutamate (HMG) by the condensation domain of the cghG NRPS module. One unique structural feature of Sch210972 is the tetramic acid motif proposed to be derived from the non-proteinogenic amino acid HMG, by a Dieckmann-type condensation catalyzed by the reductase domain of cghG. The aldolase cghB catalyzes the aldol condensation of 2 molecules of pyruvic acid to yield the intermediate 4-hydroxyl-4-methyl-2-oxoglutarate (HMOG), which can then be stereoselectively transaminated by an unidentified enzyme to form HMG. The Diels-Alderase cghA then uses the Dieckmann product released by cghG as substrate and catalyzes the Diels-Alder cycloaddition to form the decalin ring of Sch210972. CghA also suppresses the nonenzymatic formation of the alternative stereoisomer. This chain is 4-hydroxy-4-methyl-2-oxoglutarate aldolase cghB, found in Chaetomium globosum (strain ATCC 6205 / CBS 148.51 / DSM 1962 / NBRC 6347 / NRRL 1970) (Soil fungus).